The primary structure comprises 725 residues: N-alpha-acetyltransferase 35, NatC auxiliary subunit (725 aa).

Residue Ser-187 is modified to Phosphoserine. Residues Glu-548–Ser-573 form a disordered region. Over residues Arg-558–Pro-571 the composition is skewed to basic residues.

The protein belongs to the MAK10 family. Component of the N-terminal acetyltransferase C (NatC) complex, which is composed of NAA35, NAA38 and NAA30.

Its subcellular location is the cytoplasm. In terms of biological role, auxillary component of the N-terminal acetyltransferase C (NatC) complex which catalyzes acetylation of N-terminal methionine residues. N-terminal acetylation protects proteins from ubiquitination and degradation by the N-end rule pathway. Involved in regulation of apoptosis and proliferation of smooth muscle cells. This is N-alpha-acetyltransferase 35, NatC auxiliary subunit (NAA35) from Homo sapiens (Human).